A 403-amino-acid polypeptide reads, in one-letter code: Putative queuine tRNA-ribosyltransferase (403 aa).

Aspartate 91 serves as the catalytic Proton acceptor. Residues aspartate 91 to phenylalanine 95, aspartate 177, glutamine 218, and glycine 245 contribute to the substrate site. The segment at glycine 275 to aspartate 281 is RNA binding. The Nucleophile role is filled by aspartate 294. An RNA binding; important for wobble base 34 recognition region spans residues alanine 299–arginine 303. Zn(2+)-binding residues include cysteine 341, cysteine 343, cysteine 346, and histidine 372.

This sequence belongs to the queuine tRNA-ribosyltransferase family. In terms of assembly, homodimer. Within each dimer, one monomer is responsible for RNA recognition and catalysis, while the other monomer binds to the replacement base PreQ1. Requires Zn(2+) as cofactor.

It carries out the reaction 7-aminomethyl-7-carbaguanine + guanosine(34) in tRNA = 7-aminomethyl-7-carbaguanosine(34) in tRNA + guanine. Its function is as follows. Catalyzes the base-exchange of a guanine (G) residue with the queuine precursor 7-aminomethyl-7-deazaguanine (PreQ1) at position 34 (anticodon wobble position) in tRNAs with GU(N) anticodons (tRNA-Asp, -Asn, -His and -Tyr). Catalysis occurs through a double-displacement mechanism. The nucleophile active site attacks the C1' of nucleotide 34 to detach the guanine base from the RNA, forming a covalent enzyme-RNA intermediate. The proton acceptor active site deprotonates the incoming PreQ1, allowing a nucleophilic attack on the C1' of the ribose to form the product. After dissociation, two additional enzymatic reactions on the tRNA convert PreQ1 to queuine (Q), resulting in the hypermodified nucleoside queuosine (7-(((4,5-cis-dihydroxy-2-cyclopenten-1-yl)amino)methyl)-7-deazaguanosine). The sequence is that of Putative queuine tRNA-ribosyltransferase from Archaeoglobus fulgidus (strain ATCC 49558 / DSM 4304 / JCM 9628 / NBRC 100126 / VC-16).